Here is a 395-residue protein sequence, read N- to C-terminus: NAC domain-containing protein 7 (395 aa).

Residues 7-156 (VPPGFRFHPT…GWVVCRVFKK (150 aa)) form the NAC domain. The DNA-binding element occupies 107–162 (IGMRKTLVFYKGRAPNGQKSDWIMHEYRLETDENGTPQEEGWVVCRVFKKRLAAVR). Composition is skewed to polar residues over residues 344–362 (AATA…SNAE) and 382–395 (TAST…DLWK). Residues 344–395 (AATASASIQNNAKDTSNAEYQVDEEKDPKRASDMGEEYTASTSSSCQIDLWK) form a disordered region.

Belongs to the plant vascular related NAC-domain protein family. In terms of assembly, interacts with NAC083/VNI2. In terms of tissue distribution, expressed in root, shoot and hypocotyl vascular elements, columella root caps, epidermal and cortex root cells and root-hypocotyl junctions. Observed predominantly in root imature xylem vessels. Present in root developing xylems. Specifically expressed in vessels in the secondary xylem of the root-hypocotyl region, and in vessels but not in interfascicular fibers in stems.

Its subcellular location is the nucleus. Its function is as follows. Transcription activator that binds to the secondary wall NAC binding element (SNBE), 5'-(T/A)NN(C/T)(T/C/G)TNNNNNNNA(A/C)GN(A/C/T)(A/T)-3', in the promoter of target genes. Involved in xylem formation by promoting the expression of secondary wall-associated transcription factors and of genes involved in secondary wall biosynthesis and programmed cell death, genes driven by the secondary wall NAC binding element (SNBE). Triggers thickening of secondary walls. This Arabidopsis thaliana (Mouse-ear cress) protein is NAC domain-containing protein 7.